Reading from the N-terminus, the 507-residue chain is Glycerol kinase 2 (507 aa).

Residue threonine 16 participates in ADP binding. ATP-binding residues include threonine 16, threonine 17, and serine 18. Threonine 16 is a binding site for sn-glycerol 3-phosphate. Arginine 20 contributes to the ADP binding site. Sn-glycerol 3-phosphate contacts are provided by arginine 86, glutamate 87, tyrosine 138, and aspartate 248. Residues arginine 86, glutamate 87, tyrosine 138, aspartate 248, and glutamine 249 each coordinate glycerol. 2 residues coordinate ADP: threonine 270 and glycine 314. Positions 270, 314, 318, and 415 each coordinate ATP. ADP contacts are provided by glycine 415 and asparagine 419.

Belongs to the FGGY kinase family.

The catalysed reaction is glycerol + ATP = sn-glycerol 3-phosphate + ADP + H(+). It participates in polyol metabolism; glycerol degradation via glycerol kinase pathway; sn-glycerol 3-phosphate from glycerol: step 1/1. Inhibited by fructose 1,6-bisphosphate (FBP). Its function is as follows. Key enzyme in the regulation of glycerol uptake and metabolism. Catalyzes the phosphorylation of glycerol to yield sn-glycerol 3-phosphate. The polypeptide is Glycerol kinase 2 (Streptomyces avermitilis (strain ATCC 31267 / DSM 46492 / JCM 5070 / NBRC 14893 / NCIMB 12804 / NRRL 8165 / MA-4680)).